We begin with the raw amino-acid sequence, 243 residues long: Peptidyl-tRNA hydrolase (243 aa).

Tyrosine 14 provides a ligand contact to tRNA. Histidine 19 functions as the Proton acceptor in the catalytic mechanism. TRNA is bound by residues phenylalanine 64, asparagine 66, and asparagine 112. The segment covering 190 to 205 has biased composition (basic and acidic residues); the sequence is KAEEEKPAKEMKDAGK. Positions 190 to 243 are disordered; that stretch reads KAEEEKPAKEMKDAGKKPASQSHIHQARNHNQPKLPATGPMADMLKKMFGKKGD. A compositionally biased stretch (polar residues) spans 208 to 221; the sequence is ASQSHIHQARNHNQ.

Belongs to the PTH family. In terms of assembly, monomer.

Its subcellular location is the cytoplasm. It carries out the reaction an N-acyl-L-alpha-aminoacyl-tRNA + H2O = an N-acyl-L-amino acid + a tRNA + H(+). Hydrolyzes ribosome-free peptidyl-tRNAs (with 1 or more amino acids incorporated), which drop off the ribosome during protein synthesis, or as a result of ribosome stalling. In terms of biological role, catalyzes the release of premature peptidyl moieties from peptidyl-tRNA molecules trapped in stalled 50S ribosomal subunits, and thus maintains levels of free tRNAs and 50S ribosomes. The sequence is that of Peptidyl-tRNA hydrolase from Rhizobium johnstonii (strain DSM 114642 / LMG 32736 / 3841) (Rhizobium leguminosarum bv. viciae).